The following is a 425-amino-acid chain: Stabilizer of axonemal microtubules 4 (425 aa).

2 disordered regions span residues 259 to 297 (RGSDRDTGYSRVSERSLNPRMPTPSSQPTSMSHRSYQPP) and 315 to 335 (NKEPTGFTLNNPSYVRSSYEQ). The span at 260-272 (GSDRDTGYSRVSE) shows a compositional bias: basic and acidic residues. The span at 277 to 290 (PRMPTPSSQPTSMS) shows a compositional bias: low complexity. Polar residues predominate over residues 321-332 (FTLNNPSYVRSS).

Microtubule inner protein component of sperm flagellar doublet microtubules. Interacts with PPP1CA. As to expression, expressed in brain, ovaries and testis. Expressed in the tracheal epithelium and in secondary spermatocytes and spermatids present in the seminiferous tubule. Expressed in ependymal cells lining the ventricular walls of the brain.

It is found in the cell projection. The protein localises to the cilium. The protein resides in the cytoplasm. It localises to the cytoskeleton. Its subcellular location is the flagellum axoneme. The protein is Stabilizer of axonemal microtubules 4 of Rattus norvegicus (Rat).